Reading from the N-terminus, the 327-residue chain is Probable cell division protein WhiA (327 aa).

The segment at residues 275–308 is a DNA-binding region (H-T-H motif); it reads SLEELGRLADPPMTKDAVAGRIRRLLSMADRKAK. The segment at 304-327 is disordered; sequence DRKAKQDGIPDTESAVTPDLLEDA.

This sequence belongs to the WhiA family.

In terms of biological role, involved in cell division and chromosome segregation. The sequence is that of Probable cell division protein WhiA from Mycobacterium sp. (strain MCS).